Consider the following 107-residue polypeptide: NADH-quinone oxidoreductase subunit K (107 aa).

Transmembrane regions (helical) follow at residues 9–29 (IGVNHFLTISVILFGLGMFAV), 36–56 (IVILMGVELILNAANINFLTF), and 68–88 (FSLFVIVLAAAEAAIALAIVI).

It belongs to the complex I subunit 4L family. NDH-1 is composed of 14 different subunits. Subunits NuoA, H, J, K, L, M, N constitute the membrane sector of the complex.

It is found in the cell inner membrane. The catalysed reaction is a quinone + NADH + 5 H(+)(in) = a quinol + NAD(+) + 4 H(+)(out). Functionally, NDH-1 shuttles electrons from NADH, via FMN and iron-sulfur (Fe-S) centers, to quinones in the respiratory chain. The immediate electron acceptor for the enzyme in this species is believed to be a menaquinone. Couples the redox reaction to proton translocation (for every two electrons transferred, four hydrogen ions are translocated across the cytoplasmic membrane), and thus conserves the redox energy in a proton gradient. In Chlorobaculum tepidum (strain ATCC 49652 / DSM 12025 / NBRC 103806 / TLS) (Chlorobium tepidum), this protein is NADH-quinone oxidoreductase subunit K.